A 688-amino-acid polypeptide reads, in one-letter code: ERI1 exoribonuclease 2 (688 aa).

Residues 37-226 (LIVVDFESTC…DDSRNTALLA (190 aa)) enclose the Exonuclease domain. Mg(2+) contacts are provided by Asp-41, Glu-43, and Asp-156. The Proton acceptor role is filled by Glu-43. Glu-43 contacts AMP. His-213 (proton acceptor) is an active-site residue. Residue His-213 coordinates AMP. Residue Asp-218 participates in Mg(2+) binding. A compositionally biased stretch (polar residues) spans 337 to 360 (VDQLHSPTLNPPLTMQKPSKSDQL). Disordered stretches follow at residues 337–367 (VDQLHSPTLNPPLTMQKPSKSDQLALNDSSK) and 523–546 (DPLLSGGTKRNSLSPPASPRTKRQ). The Zn(2+) site is built by Cys-594, Cys-596, Cys-619, and Cys-631. Residues 594–640 (CKCGRRSKRLIVSNNGPNHGKAFYCCPVGKYQQDRKCCGYFKWEQTL) form a GRF-type zinc finger.

The protein belongs to the ERI2 family. It depends on Mg(2+) as a cofactor.

The polypeptide is ERI1 exoribonuclease 2 (Eri2) (Mus musculus (Mouse)).